Here is a 547-residue protein sequence, read N- to C-terminus: MTKTASEILNNPFLNKGTAFTKEERQALGLTGTLPSKVQTIDEQATQAYAQFKSKPSRLEQRIFLMNLFNENRTLFFHLMDEHVVEFMPIVYDPVVADSIEQYNELFLDPQNAAFVSVDAPEDIEATLKNAADGRDIRLVVVTDAEGILGMGDWGVNGVDIAIGKLMVYTAAAGIDPSQVLPVSIDAGTNNQKLLDDPLYLGNRHKCVSGEQYYDVIDKFVAAEQQLFPDSLLHFEDFGRDNAQVILDKYKDQIATFNDDIQGTGMVVLAGILGALNISKESIKDQKILSFGAGTAGMGIANQILDELMQAGLTEEEAKQHFYAVDKQGLLFDDTEGLTPAQKAFTRKRSEFSNADELTNLEAVVKAVHPTVMIGTSTQPGTFTESIIKEMAAHTERPIIFPLSNPTKLAEAKAEDLIKWTDGRALVATGIPADDVEYKGVTYQIGQGNNALMYPGLGFGLIASTAKVLNAETLSAACHALGGIVDTSKPGAAVLPPVAKITEFSQKLAEVVAQSVIDQKLNKEPIADAKQAVADMKWVPEYRAISK.

Catalysis depends on tyrosine 92, which acts as the Proton donor. Lysine 165 serves as the catalytic Proton acceptor. Residue lysine 165 coordinates substrate. Mn(2+) contacts are provided by glutamate 236, aspartate 237, and aspartate 260. NAD(+) is bound by residues 293 to 296 (AGTA), asparagine 405, and asparagine 450. Asparagine 450 serves as a coordination point for substrate.

This sequence belongs to the malic enzymes family. In terms of assembly, homodimer. Requires Mn(2+) as cofactor. The cofactor is NAD(+).

The enzyme catalyses (S)-malate + H(+) = (S)-lactate + CO2. Functionally, involved in the malolactic fermentation (MLF) of wine, which results in a natural decrease in acidity and favorable changes in wine flavors. Catalyzes the decarboxylation of L-malate to L-lactate. The polypeptide is Malolactic enzyme (Lactiplantibacillus plantarum (strain ATCC BAA-793 / NCIMB 8826 / WCFS1) (Lactobacillus plantarum)).